The following is a 127-amino-acid chain: MARIAGVDLPRDKRVEIGLTYLFGIGLSRSQEILAETGVNPDTRVRDLTDEEVANLRAYIETNYQIEGDLRRWEAMNIKRLADIGTYRGRRHRQGLPVRGQRTRTNARTRRGRRVTVAGKKKAPSKK.

A disordered region spans residues 90-127 (RRHRQGLPVRGQRTRTNARTRRGRRVTVAGKKKAPSKK). The segment covering 101-127 (QRTRTNARTRRGRRVTVAGKKKAPSKK) has biased composition (basic residues).

It belongs to the universal ribosomal protein uS13 family. As to quaternary structure, part of the 30S ribosomal subunit. Forms a loose heterodimer with protein S19. Forms two bridges to the 50S subunit in the 70S ribosome.

Functionally, located at the top of the head of the 30S subunit, it contacts several helices of the 16S rRNA. In the 70S ribosome it contacts the 23S rRNA (bridge B1a) and protein L5 of the 50S subunit (bridge B1b), connecting the 2 subunits; these bridges are implicated in subunit movement. Contacts the tRNAs in the A and P-sites. The polypeptide is Small ribosomal subunit protein uS13 (Rippkaea orientalis (strain PCC 8801 / RF-1) (Cyanothece sp. (strain PCC 8801))).